A 418-amino-acid chain; its full sequence is CinA-like protein (418 aa).

This sequence belongs to the CinA family.

The protein is CinA-like protein of Leptospira borgpetersenii serovar Hardjo-bovis (strain L550).